Here is a 257-residue protein sequence, read N- to C-terminus: tRNA pseudouridine synthase A (257 aa).

Catalysis depends on Asp-53, which acts as the Nucleophile. Residue Tyr-111 coordinates substrate.

This sequence belongs to the tRNA pseudouridine synthase TruA family. In terms of assembly, homodimer.

It carries out the reaction uridine(38/39/40) in tRNA = pseudouridine(38/39/40) in tRNA. Functionally, formation of pseudouridine at positions 38, 39 and 40 in the anticodon stem and loop of transfer RNAs. This is tRNA pseudouridine synthase A from Xylella fastidiosa (strain M12).